We begin with the raw amino-acid sequence, 345 residues long: Heat-inducible transcription repressor HrcA (345 aa).

Belongs to the HrcA family.

Functionally, negative regulator of class I heat shock genes (grpE-dnaK-dnaJ and groELS operons). Prevents heat-shock induction of these operons. The protein is Heat-inducible transcription repressor HrcA of Desulfitobacterium hafniense (strain DSM 10664 / DCB-2).